The chain runs to 1117 residues: Endogenous retrovirus group K member 9 Pol protein (1117 aa).

Gly-2 carries N-myristoyl glycine lipidation. Positions 58 to 195 (KDWKRIGKEL…AGQVPVTLQP (138 aa)) constitute a Reverse transcriptase domain. Positions 165-264 (GKGPELVGPS…APPSRQGSEL (100 aa)) are disordered. Pro residues predominate over residues 232-247 (GMPPAPQGRAPYPQPP). 2 consecutive CCHC-type zinc fingers follow at residues 544–561 (GKCY…NCPV) and 580–597 (DLCP…QCRS). The interval 598–629 (KFDKNGQPLSGNEQRGQPQAPQQTGAFPIQPF) is disordered. Residues 604–622 (QPLSGNEQRGQPQAPQQTG) are compositionally biased toward polar residues. Positions 800 to 875 (FEGLVDTGAD…IPLNLWGRDL (76 aa)) constitute a Peptidase A2 domain. Asp-805 is an active-site residue. Positions 890–936 (YSPTSQKIMTKRGYIPGKGLGKNEDGIKIPFEAKINQKREGIGYPFL) constitute a G-patch domain.

The protein belongs to the beta type-B retroviral polymerase family. HERV class-II K(HML-2) pol subfamily. Post-translationally, myristoylation is essential for retroviral assembly. Alteration of the glycine residue leads to a block in the budding of particles and an accumulation of Gag inside the cell. Specific enzymatic cleavages may yield mature proteins.

It is found in the cell membrane. It carries out the reaction Processing at the authentic HIV-1 PR recognition site and release of the mature p17 matrix and the p24 capsid protein, as a result of the cleavage of the -SQNY-|-PIVQ- cleavage site.. It catalyses the reaction DNA(n) + a 2'-deoxyribonucleoside 5'-triphosphate = DNA(n+1) + diphosphate. The catalysed reaction is Endonucleolytic cleavage to 5'-phosphomonoester.. In terms of biological role, the products of the Gag polyproteins of infectious retroviruses perform highly complex orchestrated tasks during the assembly, budding, maturation, and infection stages of the viral replication cycle. During viral assembly, the proteins form membrane associations and self-associations that ultimately result in budding of an immature virion from the infected cell. Gag precursors also function during viral assembly to selectively bind and package two plus strands of genomic RNA. Endogenous Gag proteins may have kept, lost or modified their original function during evolution. Functionally, early post-infection, the reverse transcriptase converts the viral RNA genome into double-stranded viral DNA. The RNase H domain of the reverse transcriptase performs two functions. It degrades the RNA template and specifically removes the RNA primer from the RNA/DNA hybrid. Following nuclear import, the integrase catalyzes the insertion of the linear, double-stranded viral DNA into the host cell chromosome. Endogenous Pol proteins may have kept, lost or modified their original function during evolution. This Homo sapiens (Human) protein is Endogenous retrovirus group K member 9 Pol protein (ERVK-9).